Reading from the N-terminus, the 1196-residue chain is DNA-directed RNA polymerase subunit beta (1196 aa).

Positions 1152-1165 (EEEIEMRDLEDEED) are enriched in acidic residues. Residues 1152–1196 (EEEIEMRDLEDEEDAKQADGLALSGDEAPEETASPDVERDAVTKE) form a disordered region. Positions 1187–1196 (DVERDAVTKE) are enriched in basic and acidic residues.

Belongs to the RNA polymerase beta chain family. The RNAP catalytic core consists of 2 alpha, 1 beta, 1 beta' and 1 omega subunit. When a sigma factor is associated with the core the holoenzyme is formed, which can initiate transcription.

It carries out the reaction RNA(n) + a ribonucleoside 5'-triphosphate = RNA(n+1) + diphosphate. DNA-dependent RNA polymerase catalyzes the transcription of DNA into RNA using the four ribonucleoside triphosphates as substrates. This Bacillus velezensis (strain DSM 23117 / BGSC 10A6 / LMG 26770 / FZB42) (Bacillus amyloliquefaciens subsp. plantarum) protein is DNA-directed RNA polymerase subunit beta.